The chain runs to 345 residues: Phosphoribosylformylglycinamidine cyclo-ligase (345 aa).

The protein belongs to the AIR synthase family.

The protein localises to the cytoplasm. It catalyses the reaction 2-formamido-N(1)-(5-O-phospho-beta-D-ribosyl)acetamidine + ATP = 5-amino-1-(5-phospho-beta-D-ribosyl)imidazole + ADP + phosphate + H(+). The protein operates within purine metabolism; IMP biosynthesis via de novo pathway; 5-amino-1-(5-phospho-D-ribosyl)imidazole from N(2)-formyl-N(1)-(5-phospho-D-ribosyl)glycinamide: step 2/2. The chain is Phosphoribosylformylglycinamidine cyclo-ligase from Methanopyrus kandleri (strain AV19 / DSM 6324 / JCM 9639 / NBRC 100938).